The sequence spans 293 residues: 33 kDa chaperonin (293 aa).

2 disulfides stabilise this stretch: Cys238–Cys240 and Cys271–Cys274.

This sequence belongs to the HSP33 family. Under oxidizing conditions two disulfide bonds are formed involving the reactive cysteines. Under reducing conditions zinc is bound to the reactive cysteines and the protein is inactive.

It is found in the cytoplasm. Its function is as follows. Redox regulated molecular chaperone. Protects both thermally unfolding and oxidatively damaged proteins from irreversible aggregation. Plays an important role in the bacterial defense system toward oxidative stress. The polypeptide is 33 kDa chaperonin (Staphylococcus aureus (strain Mu3 / ATCC 700698)).